A 242-amino-acid polypeptide reads, in one-letter code: Protein ABHD14A (242 aa).

Residues 6–26 (AALLGLGLLLMFLLYMGLPGP) traverse the membrane as a helical; Signal-anchor for type II membrane protein segment. Asn38 carries N-linked (GlcNAc...) asparagine glycosylation. Residues Ser142, Asp193, and His220 each act as charge relay system in the active site.

It belongs to the AB hydrolase superfamily. ABHD14 family.

It is found in the cytoplasm. The protein localises to the membrane. In terms of biological role, possible role in granule neuron development. The sequence is that of Protein ABHD14A from Rattus norvegicus (Rat).